Consider the following 203-residue polypeptide: Small ribosomal subunit protein uS4c (203 aa).

Residues 91–154 enclose the S4 RNA-binding domain; that stretch reads MRLDNIIFRL…KYESIISKNI (64 aa).

It belongs to the universal ribosomal protein uS4 family. In terms of assembly, part of the 30S ribosomal subunit. Contacts protein S5. The interaction surface between S4 and S5 is involved in control of translational fidelity.

The protein resides in the plastid. The protein localises to the chloroplast. Functionally, one of the primary rRNA binding proteins, it binds directly to 16S rRNA where it nucleates assembly of the body of the 30S subunit. With S5 and S12 plays an important role in translational accuracy. The sequence is that of Small ribosomal subunit protein uS4c (rps4) from Lopidium struthiopteris (Moss).